The chain runs to 330 residues: ADP-L-glycero-D-manno-heptose-6-epimerase (330 aa).

NADP(+) is bound by residues 11–12 (FI), 32–33 (DD), glutamine 39, glutamine 54, 75–79 (QGACA), and asparagine 92. The Proton acceptor role is filled by tyrosine 139. NADP(+) is bound at residue lysine 143. Asparagine 168 lines the substrate pocket. NADP(+)-binding residues include valine 169 and lysine 177. The active-site Proton acceptor is the lysine 177. Substrate is bound by residues arginine 179, histidine 186, 200–203 (FGEH), arginine 213, and tyrosine 292.

Belongs to the NAD(P)-dependent epimerase/dehydratase family. HldD subfamily. Homopentamer. NADP(+) serves as cofactor.

It catalyses the reaction ADP-D-glycero-beta-D-manno-heptose = ADP-L-glycero-beta-D-manno-heptose. Its pathway is nucleotide-sugar biosynthesis; ADP-L-glycero-beta-D-manno-heptose biosynthesis; ADP-L-glycero-beta-D-manno-heptose from D-glycero-beta-D-manno-heptose 7-phosphate: step 4/4. Functionally, catalyzes the interconversion between ADP-D-glycero-beta-D-manno-heptose and ADP-L-glycero-beta-D-manno-heptose via an epimerization at carbon 6 of the heptose. The polypeptide is ADP-L-glycero-D-manno-heptose-6-epimerase (Pseudomonas aeruginosa (strain UCBPP-PA14)).